A 618-amino-acid polypeptide reads, in one-letter code: Serine--tRNA ligase, cytoplasmic (618 aa).

Residue 417-419 (TSE) coordinates L-serine. 448-450 (RTE) provides a ligand contact to ATP. E472 contacts L-serine. 536–539 (EVSS) contacts ATP. S570 is a binding site for L-serine.

It belongs to the class-II aminoacyl-tRNA synthetase family. Type-1 seryl-tRNA synthetase subfamily. Homodimer. The tRNA molecule binds across the dimer.

Its subcellular location is the cytoplasm. The enzyme catalyses tRNA(Ser) + L-serine + ATP = L-seryl-tRNA(Ser) + AMP + diphosphate + H(+). The catalysed reaction is tRNA(Sec) + L-serine + ATP = L-seryl-tRNA(Sec) + AMP + diphosphate + H(+). It participates in aminoacyl-tRNA biosynthesis; selenocysteinyl-tRNA(Sec) biosynthesis; L-seryl-tRNA(Sec) from L-serine and tRNA(Sec): step 1/1. Functionally, catalyzes the attachment of serine to tRNA(Ser). Is also able to aminoacylate tRNA(Sec) with serine, to form the misacylated tRNA L-seryl-tRNA(Sec), which will be further converted into selenocysteinyl-tRNA(Sec). The protein is Serine--tRNA ligase, cytoplasmic of Plasmodium falciparum (isolate 3D7).